A 642-amino-acid polypeptide reads, in one-letter code: Threonine--tRNA ligase (642 aa).

A TGS domain is found at 1–61; the sequence is MPIITLPDGS…STDSDLSIIT (61 aa). The tract at residues 243–534 is catalytic; sequence DHRKIGKQLD…LIEEYAGKFP (292 aa). Residues cysteine 334, histidine 385, and histidine 511 each contribute to the Zn(2+) site.

It belongs to the class-II aminoacyl-tRNA synthetase family. Homodimer. Requires Zn(2+) as cofactor.

The protein localises to the cytoplasm. It catalyses the reaction tRNA(Thr) + L-threonine + ATP = L-threonyl-tRNA(Thr) + AMP + diphosphate + H(+). Catalyzes the attachment of threonine to tRNA(Thr) in a two-step reaction: L-threonine is first activated by ATP to form Thr-AMP and then transferred to the acceptor end of tRNA(Thr). Also edits incorrectly charged L-seryl-tRNA(Thr). The protein is Threonine--tRNA ligase of Shewanella denitrificans (strain OS217 / ATCC BAA-1090 / DSM 15013).